The sequence spans 321 residues: GTP 3',8-cyclase (321 aa).

Positions 5-227 constitute a Radical SAM core domain; that stretch reads SYDRVVDYLR…DEGYDGASPS (223 aa). GTP is bound at residue Arg-14. Positions 21 and 25 each coordinate [4Fe-4S] cluster. Tyr-27 lines the S-adenosyl-L-methionine pocket. Cys-28 serves as a coordination point for [4Fe-4S] cluster. Arg-64 provides a ligand contact to GTP. Gly-68 contacts S-adenosyl-L-methionine. Thr-95 serves as a coordination point for GTP. Position 119 (Ser-119) interacts with S-adenosyl-L-methionine. GTP is bound at residue Lys-155. Position 189 (Met-189) interacts with S-adenosyl-L-methionine. The [4Fe-4S] cluster site is built by Cys-249 and Cys-252. Position 254-256 (254-256) interacts with GTP; sequence RIR. Position 266 (Cys-266) interacts with [4Fe-4S] cluster.

It belongs to the radical SAM superfamily. MoaA family. Monomer and homodimer. [4Fe-4S] cluster serves as cofactor.

The catalysed reaction is GTP + AH2 + S-adenosyl-L-methionine = (8S)-3',8-cyclo-7,8-dihydroguanosine 5'-triphosphate + 5'-deoxyadenosine + L-methionine + A + H(+). The protein operates within cofactor biosynthesis; molybdopterin biosynthesis. Catalyzes the cyclization of GTP to (8S)-3',8-cyclo-7,8-dihydroguanosine 5'-triphosphate. The chain is GTP 3',8-cyclase from Sulfurimonas denitrificans (strain ATCC 33889 / DSM 1251) (Thiomicrospira denitrificans (strain ATCC 33889 / DSM 1251)).